The chain runs to 775 residues: Rab3 GTPase-activating protein catalytic subunit (775 aa).

Serine 173, serine 330, serine 373, serine 375, and serine 384 each carry phosphoserine. The segment at 324-351 (DEGKKTSPSDSMTKAYPADAGKAGGQLG) is disordered. The tract at residues 386–414 (AEDLRGNGQESTKKGGPKDMAPLKPEGRL) is disordered. Position 458 is a phosphoserine (serine 458).

The protein belongs to the Rab3-GAP catalytic subunit family. In terms of assembly, the Rab3 GTPase-activating complex is a heterodimer composed of Rab3gap1 and Rab3gap2. The Rab3 GTPase-activating complex interacts with DMXL2. Interacts with LMAN1.

It is found in the cytoplasm. It localises to the endoplasmic reticulum. Its subcellular location is the golgi apparatus. The protein resides in the cis-Golgi network. Catalytic subunit of the Rab3 GTPase-activating (Rab3GAP) complex composed of RAB3GAP1 and RAB3GAP2, which has GTPase-activating protein (GAP) activity towards various Rab3 subfamily members (RAB3A, RAB3B, RAB3C and RAB3D), RAB5A and RAB43, and guanine nucleotide exchange factor (GEF) activity towards RAB18. As part of the Rab3GAP complex, acts as a GAP for Rab3 proteins by converting active RAB3-GTP to the inactive form RAB3-GDP. Rab3 proteins are involved in regulated exocytosis of neurotransmitters and hormones. The Rab3GAP complex, acts as a GEF for RAB18 by promoting the conversion of inactive RAB18-GDP to the active form RAB18-GTP. Recruits and stabilizes RAB18 at the cis-Golgi membrane where RAB18 is most likely activated. Also involved in RAB18 recruitment at the endoplasmic reticulum (ER) membrane where it maintains proper ER structure. Required for normal eye and brain development. May participate in neurodevelopmental processes such as proliferation, migration and differentiation before synapse formation, and non-synaptic vesicular release of neurotransmitters. The sequence is that of Rab3 GTPase-activating protein catalytic subunit from Rattus norvegicus (Rat).